The following is a 510-amino-acid chain: MLQLVAACPESCVVCTKDVTLCHQLTYIVAAPMTTRVLIITDGYLSSIESTNLSLLFNLALLSLSRNGIEDVQEDALDGLTMLRTLLLEHNQISSSSLTDHTFSKLHSLQVLVLSNNALRTLRGSWFRNTRGLTRLQLDGNQITNLTDSSFGGTNLHSLRHLDLSNNFISYIGKDAFRPLPQLQEVDLSRNRLAHMPDVFTPLKQLIHLSLDKNQWSCTCDLHPLARFLRNYIKSSAHTLRNAKDLNCQPSTAAVAAAQSVLRLSETNCDPKAPNFTLVLKDRSPLLPGQDVALLTVLGFAGAVGLTCLGLVVFNWKLQQGKANEHTSENLCCRTFDEPLCAHGARNYHTKGYCNCHLTQENEIKVMSIVGSRKEMPLLQENSHQATSASESTTLDGSFRNLKKKDHGVGSTLFCQDGRLLHSRCSQSPGNTTAFNEAGLLTTYNSRKVQKLRNLESGEVLPQTLPHHIIRTEDISSDTFRRRYAIPTSALAGESLEKHLTNESCLHTLN.

LRR repeat units follow at residues 34-55 (TTRVLIITDGYLSSIESTNLSL), 58-79 (NLALLSLSRNGIEDVQEDALDG), 82-102 (MLRTLLLEHNQISSSSLTDHT), 108-129 (SLQVLVLSNNALRTLRGSWFRN), 132-153 (GLTRLQLDGNQITNLTDSSFGG), 158-179 (SLRHLDLSNNFISYIGKDAFRP), and 182-203 (QLQEVDLSRNRLAHMPDVFTPL). In terms of domain architecture, LRRCT spans 214-271 (NQWSCTCDLHPLARFLRNYIKSSAHTLRNAKDLNCQPSTAAVAAAQSVLRLSETNCDP). A helical transmembrane segment spans residues 294–314 (LLTVLGFAGAVGLTCLGLVVF).

Its subcellular location is the membrane. The chain is Leucine-rich repeat-containing protein 53 (LRRC53) from Macaca fascicularis (Crab-eating macaque).